Reading from the N-terminus, the 122-residue chain is Small ribosomal subunit protein uS13 (122 aa).

The disordered stretch occupies residues 98–122; the sequence is VRGQKTKSNARTRKGPRPSRIKKKK. Positions 101 to 122 are enriched in basic residues; that stretch reads QKTKSNARTRKGPRPSRIKKKK.

The protein belongs to the universal ribosomal protein uS13 family. As to quaternary structure, part of the 30S ribosomal subunit. Forms a loose heterodimer with protein S19. Forms two bridges to the 50S subunit in the 70S ribosome.

Its function is as follows. Located at the top of the head of the 30S subunit, it contacts several helices of the 16S rRNA. In the 70S ribosome it contacts the 23S rRNA (bridge B1a) and protein L5 of the 50S subunit (bridge B1b), connecting the 2 subunits; these bridges are implicated in subunit movement. Contacts the tRNAs in the A and P-sites. The protein is Small ribosomal subunit protein uS13 of Thermosipho africanus (strain TCF52B).